Here is a 278-residue protein sequence, read N- to C-terminus: Protein canopy homolog 3 (278 aa).

Residues 1-30 (MDSMPEPASRCLLLLPLLLLLLLLLPAPEL) form the signal peptide. Residues 47-271 (SKCEVCKYVA…EGIQKASPLT (225 aa)) form the Saposin B-type domain. Intrachain disulfides connect cysteine 49–cysteine 206, cysteine 52–cysteine 194, and cysteine 104–cysteine 166. Asparagine 153 is a glycosylation site (N-linked (GlcNAc...) asparagine). Residues 153–179 (NETSAEVADLKKQCDVLVEEFEEVIED) adopt a coiled-coil conformation. Positions 215–278 (KGDTAALGGK…PLTHSPPDEL (64 aa)) are disordered. Low complexity predominate over residues 233-243 (AKAAGGRSSSS).

The protein belongs to the canopy family. In terms of assembly, interacts with HSP90B1; this interaction is disrupted in the presence of ATP. Interacts with TLR1, TLR2, TLR4 and TLR9. Strongest interaction with TLR4.

The protein resides in the endoplasmic reticulum. In terms of biological role, toll-like receptor (TLR)-specific co-chaperone for HSP90B1. Required for proper TLR folding, except that of TLR3, and hence controls TLR exit from the endoplasmic reticulum. Consequently, required for both innate and adaptive immune responses. The polypeptide is Protein canopy homolog 3 (CNPY3) (Homo sapiens (Human)).